Reading from the N-terminus, the 455-residue chain is N-acetyl-S-(2-succino)cysteine lyase (455 aa).

106–107 (TT) lines the fumarate pocket. H154 serves as the catalytic Proton donor/acceptor. Fumarate is bound at residue R233. S277 serves as the catalytic Proton donor/acceptor. Fumarate-binding positions include S278 and 283–285 (KRN).

The protein belongs to the lyase 1 family.

The catalysed reaction is N-acetyl-S-(2-succino)-L-cysteine = N-acetyl-L-cysteine + fumarate. The protein operates within amino-acid biosynthesis; L-cysteine biosynthesis. In terms of biological role, catalyzes the cleavage of N-acetyl-S-(2-succino)cysteine into fumarate and N-acetylcysteine. Is involved in a S-(2-succino)cysteine (2SC) degradation pathway that allows the bacterium to recover cysteine from 2SC and to detoxify 2SC that may be a toxic metabolite. Can also perform the reverse reaction in vitro, and has minor activity against 2SC and other small molecule thiols. The chain is N-acetyl-S-(2-succino)cysteine lyase from Enterococcus italicus (strain DSM 15952 / CCUG 50447 / LMG 22039 / TP 1.5).